The following is a 317-amino-acid chain: Putative HTH-type transcriptional regulatory protein Mlab_0160 (317 aa).

One can recognise an HTH cro/C1-type domain in the interval L132–L189. A DNA-binding region (H-T-H motif) is located at residues L143 to G162. Residues V199 to E219 are disordered. Over residues P209 to E219 the composition is skewed to basic and acidic residues.

This chain is Putative HTH-type transcriptional regulatory protein Mlab_0160, found in Methanocorpusculum labreanum (strain ATCC 43576 / DSM 4855 / Z).